The primary structure comprises 153 residues: Glucose-6-phosphate 1-dehydrogenase (153 aa).

NADP(+) contacts are provided by R21 and K120. D-glucose 6-phosphate is bound at residue K120.

Belongs to the glucose-6-phosphate dehydrogenase family.

Its subcellular location is the cytoplasm. The protein resides in the cytosol. The catalysed reaction is D-glucose 6-phosphate + NADP(+) = 6-phospho-D-glucono-1,5-lactone + NADPH + H(+). The protein operates within carbohydrate degradation; pentose phosphate pathway; D-ribulose 5-phosphate from D-glucose 6-phosphate (oxidative stage): step 1/3. Its function is as follows. Cytosolic glucose-6-phosphate dehydrogenase that catalyzes the first and rate-limiting step of the oxidative branch within the pentose phosphate pathway/shunt, an alternative route to glycolysis for the dissimilation of carbohydrates and a major source of reducing power and metabolic intermediates for fatty acid and nucleic acid biosynthetic processes. The polypeptide is Glucose-6-phosphate 1-dehydrogenase (ZW) (Hyalophora cecropia (Cecropia moth)).